The following is a 390-amino-acid chain: Flagellar P-ring protein (390 aa).

The signal sequence occupies residues 1-25 (MLLKKIFLTGIIVLDLVFFVSYGFA).

It belongs to the FlgI family. The basal body constitutes a major portion of the flagellar organelle and consists of four rings (L,P,S, and M) mounted on a central rod.

The protein resides in the periplasm. It is found in the bacterial flagellum basal body. Its function is as follows. Assembles around the rod to form the L-ring and probably protects the motor/basal body from shearing forces during rotation. The sequence is that of Flagellar P-ring protein from Syntrophus aciditrophicus (strain SB).